We begin with the raw amino-acid sequence, 305 residues long: UDP-3-O-acyl-N-acetylglucosamine deacetylase (305 aa).

Zn(2+) contacts are provided by His-79, His-238, and Asp-242. The active-site Proton donor is the His-265.

The protein belongs to the LpxC family. Zn(2+) serves as cofactor.

The catalysed reaction is a UDP-3-O-[(3R)-3-hydroxyacyl]-N-acetyl-alpha-D-glucosamine + H2O = a UDP-3-O-[(3R)-3-hydroxyacyl]-alpha-D-glucosamine + acetate. It functions in the pathway glycolipid biosynthesis; lipid IV(A) biosynthesis; lipid IV(A) from (3R)-3-hydroxytetradecanoyl-[acyl-carrier-protein] and UDP-N-acetyl-alpha-D-glucosamine: step 2/6. Catalyzes the hydrolysis of UDP-3-O-myristoyl-N-acetylglucosamine to form UDP-3-O-myristoylglucosamine and acetate, the committed step in lipid A biosynthesis. The sequence is that of UDP-3-O-acyl-N-acetylglucosamine deacetylase from Cronobacter sakazakii (strain ATCC BAA-894) (Enterobacter sakazakii).